The following is a 547-amino-acid chain: Membrane protein insertase YidC (547 aa).

Residues 8 to 28 (LRLILAIALSFLFIALYSYFF) traverse the membrane as a helical segment. Positions 37–50 (QTTKQETTNNHTAT) are enriched in low complexity. Positions 37–62 (QTTKQETTNNHTATSPNAPNAQHFST) are disordered. The segment covering 51–62 (SPNAPNAQHFST) has biased composition (polar residues). 5 helical membrane-spanning segments follow: residues 325-345 (VIEY…LDYL), 348-368 (FVGN…IILY), 414-434 (GANP…FFAI), 449-469 (WILW…PLLM), and 495-515 (LLPL…VLYW).

Belongs to the OXA1/ALB3/YidC family. Type 1 subfamily. Interacts with the Sec translocase complex via SecD. Specifically interacts with transmembrane segments of nascent integral membrane proteins during membrane integration.

The protein localises to the cell inner membrane. Functionally, required for the insertion and/or proper folding and/or complex formation of integral membrane proteins into the membrane. Involved in integration of membrane proteins that insert both dependently and independently of the Sec translocase complex, as well as at least some lipoproteins. Aids folding of multispanning membrane proteins. The sequence is that of Membrane protein insertase YidC from Helicobacter pylori (strain ATCC 700392 / 26695) (Campylobacter pylori).